The primary structure comprises 451 residues: Trigger factor (451 aa).

In terms of domain architecture, PPIase FKBP-type spans 171–256 (GDRVKVNFKG…ATAIEAPEDK (86 aa)).

The protein belongs to the FKBP-type PPIase family. Tig subfamily.

It is found in the cytoplasm. The catalysed reaction is [protein]-peptidylproline (omega=180) = [protein]-peptidylproline (omega=0). Its function is as follows. Involved in protein export. Acts as a chaperone by maintaining the newly synthesized protein in an open conformation. Functions as a peptidyl-prolyl cis-trans isomerase. The protein is Trigger factor of Bradyrhizobium sp. (strain ORS 278).